Here is an 89-residue protein sequence, read N- to C-terminus: MSRKCPLTGKRPRRGNSYTIRGIAKKKKGIGLKVTGKTPRRFFPNMITKRLWSTEENKFLKLKISTSALRLIDKLGLEKVIARAKSKGL.

Belongs to the bacterial ribosomal protein bL28 family.

This is Large ribosomal subunit protein bL28 from Chlamydia caviae (strain ATCC VR-813 / DSM 19441 / 03DC25 / GPIC) (Chlamydophila caviae).